A 239-amino-acid chain; its full sequence is 4-hydroxy-tetrahydrodipicolinate reductase (239 aa).

NAD(+)-binding positions include 12–17, 94–96, and 118–121; these read GASGRM, GTT, and ASNF. His150 serves as the catalytic Proton donor/acceptor. (S)-2,3,4,5-tetrahydrodipicolinate is bound at residue His151. The active-site Proton donor is the Lys154. 160–161 lines the (S)-2,3,4,5-tetrahydrodipicolinate pocket; sequence GT.

It belongs to the DapB family.

It is found in the cytoplasm. The enzyme catalyses (S)-2,3,4,5-tetrahydrodipicolinate + NAD(+) + H2O = (2S,4S)-4-hydroxy-2,3,4,5-tetrahydrodipicolinate + NADH + H(+). It catalyses the reaction (S)-2,3,4,5-tetrahydrodipicolinate + NADP(+) + H2O = (2S,4S)-4-hydroxy-2,3,4,5-tetrahydrodipicolinate + NADPH + H(+). It functions in the pathway amino-acid biosynthesis; L-lysine biosynthesis via DAP pathway; (S)-tetrahydrodipicolinate from L-aspartate: step 4/4. Catalyzes the conversion of 4-hydroxy-tetrahydrodipicolinate (HTPA) to tetrahydrodipicolinate. The polypeptide is 4-hydroxy-tetrahydrodipicolinate reductase (Stenotrophomonas maltophilia (strain R551-3)).